The following is a 1201-amino-acid chain: ATP-dependent helicase/deoxyribonuclease subunit B (1201 aa).

This sequence belongs to the helicase family. AddB/RexB type 2 subfamily. In terms of assembly, heterodimer of AddA and RexB. Mg(2+) is required as a cofactor.

In terms of biological role, the heterodimer acts as both an ATP-dependent DNA helicase and an ATP-dependent, dual-direction single-stranded exonuclease. Recognizes the chi site generating a DNA molecule suitable for the initiation of homologous recombination. This subunit has 5' -&gt; 3' nuclease activity but not helicase activity. This is ATP-dependent helicase/deoxyribonuclease subunit B from Levilactobacillus brevis (strain ATCC 367 / BCRC 12310 / CIP 105137 / JCM 1170 / LMG 11437 / NCIMB 947 / NCTC 947) (Lactobacillus brevis).